We begin with the raw amino-acid sequence, 120 residues long: UPF0342 protein LAF_1331 (120 aa).

Belongs to the UPF0342 family.

This chain is UPF0342 protein LAF_1331, found in Limosilactobacillus fermentum (strain NBRC 3956 / LMG 18251) (Lactobacillus fermentum).